The primary structure comprises 255 residues: Large ribosomal subunit protein uL4 (255 aa).

The protein belongs to the universal ribosomal protein uL4 family. In terms of assembly, part of the 50S ribosomal subunit.

In terms of biological role, one of the primary rRNA binding proteins, this protein initially binds near the 5'-end of the 23S rRNA. It is important during the early stages of 50S assembly. It makes multiple contacts with different domains of the 23S rRNA in the assembled 50S subunit and ribosome. Its function is as follows. Forms part of the polypeptide exit tunnel. The polypeptide is Large ribosomal subunit protein uL4 (Thermococcus onnurineus (strain NA1)).